Consider the following 483-residue polypeptide: UDP-N-acetylmuramoyl-L-alanyl-D-glutamate--2,6-diaminopimelate ligase 2 (483 aa).

Position 30 (S30) interacts with UDP-N-acetyl-alpha-D-muramoyl-L-alanyl-D-glutamate. An ATP-binding site is contributed by 111–117 (GTNGKTT). UDP-N-acetyl-alpha-D-muramoyl-L-alanyl-D-glutamate is bound by residues 156 to 157 (TT), T183, and R191. Residue K223 is modified to N6-carboxylysine. Residues R380, 404–407 (DNPR), G456, and E460 contribute to the meso-2,6-diaminopimelate site. The short motif at 404–407 (DNPR) is the Meso-diaminopimelate recognition motif element.

It belongs to the MurCDEF family. MurE subfamily. Mg(2+) serves as cofactor. Post-translationally, carboxylation is probably crucial for Mg(2+) binding and, consequently, for the gamma-phosphate positioning of ATP.

It is found in the cytoplasm. The enzyme catalyses UDP-N-acetyl-alpha-D-muramoyl-L-alanyl-D-glutamate + meso-2,6-diaminopimelate + ATP = UDP-N-acetyl-alpha-D-muramoyl-L-alanyl-gamma-D-glutamyl-meso-2,6-diaminopimelate + ADP + phosphate + H(+). Its pathway is cell wall biogenesis; peptidoglycan biosynthesis. Catalyzes the addition of meso-diaminopimelic acid to the nucleotide precursor UDP-N-acetylmuramoyl-L-alanyl-D-glutamate (UMAG) in the biosynthesis of bacterial cell-wall peptidoglycan. The sequence is that of UDP-N-acetylmuramoyl-L-alanyl-D-glutamate--2,6-diaminopimelate ligase 2 from Clostridium acetobutylicum (strain ATCC 824 / DSM 792 / JCM 1419 / IAM 19013 / LMG 5710 / NBRC 13948 / NRRL B-527 / VKM B-1787 / 2291 / W).